Here is a 714-residue protein sequence, read N- to C-terminus: Glycine--tRNA ligase beta subunit (714 aa).

Belongs to the class-II aminoacyl-tRNA synthetase family. Tetramer of two alpha and two beta subunits.

It is found in the cytoplasm. The enzyme catalyses tRNA(Gly) + glycine + ATP = glycyl-tRNA(Gly) + AMP + diphosphate. The protein is Glycine--tRNA ligase beta subunit of Rhodospirillum centenum (strain ATCC 51521 / SW).